The chain runs to 291 residues: ATP synthase gamma chain (291 aa).

It belongs to the ATPase gamma chain family. F-type ATPases have 2 components, CF(1) - the catalytic core - and CF(0) - the membrane proton channel. CF(1) has five subunits: alpha(3), beta(3), gamma(1), delta(1), epsilon(1). CF(0) has three main subunits: a, b and c.

It is found in the cell inner membrane. Functionally, produces ATP from ADP in the presence of a proton gradient across the membrane. The gamma chain is believed to be important in regulating ATPase activity and the flow of protons through the CF(0) complex. The sequence is that of ATP synthase gamma chain from Chlorobium phaeobacteroides (strain DSM 266 / SMG 266 / 2430).